We begin with the raw amino-acid sequence, 1212 residues long: Dermatan-sulfate epimerase-like protein (1212 aa).

The signal sequence occupies residues 1–20 (MALMFTGHLLFLALLMFAFS). N-linked (GlcNAc...) asparagine glycosylation is found at asparagine 28, asparagine 666, asparagine 688, and asparagine 709. The next 2 helical transmembrane spans lie at 764 to 784 (IIFP…CISL) and 803 to 823 (WILI…WSTC). Asparagine 874 carries an N-linked (GlcNAc...) asparagine glycan.

The protein belongs to the dermatan-sulfate isomerase family. As to expression, expressed in different brain areas as well as in multiple other peripheral tissues.

It is found in the membrane. The chain is Dermatan-sulfate epimerase-like protein (DSEL) from Homo sapiens (Human).